A 142-amino-acid polypeptide reads, in one-letter code: Phosphoribosyl-AMP cyclohydrolase (142 aa).

Residue Asp92 participates in Mg(2+) binding. Cys93 serves as a coordination point for Zn(2+). Asp94 and Asp96 together coordinate Mg(2+). Zn(2+)-binding residues include Cys109 and Cys116.

The protein belongs to the PRA-CH family. Homodimer. The cofactor is Mg(2+). Requires Zn(2+) as cofactor.

It is found in the cytoplasm. It carries out the reaction 1-(5-phospho-beta-D-ribosyl)-5'-AMP + H2O = 1-(5-phospho-beta-D-ribosyl)-5-[(5-phospho-beta-D-ribosylamino)methylideneamino]imidazole-4-carboxamide. It functions in the pathway amino-acid biosynthesis; L-histidine biosynthesis; L-histidine from 5-phospho-alpha-D-ribose 1-diphosphate: step 3/9. Functionally, catalyzes the hydrolysis of the adenine ring of phosphoribosyl-AMP. In Alcanivorax borkumensis (strain ATCC 700651 / DSM 11573 / NCIMB 13689 / SK2), this protein is Phosphoribosyl-AMP cyclohydrolase.